The following is a 215-amino-acid chain: Transmembrane protein 267 (215 aa).

A run of 3 helical transmembrane segments spans residues 77-97, 114-134, and 178-198; these read FGEV…HFFQ, FLHC…AVHL, and SSFY…LMYL.

It is found in the membrane. This chain is Transmembrane protein 267, found in Mus musculus (Mouse).